Here is a 252-residue protein sequence, read N- to C-terminus: tRNA1(Val) (adenine(37)-N6)-methyltransferase (252 aa).

It belongs to the methyltransferase superfamily. tRNA (adenine-N(6)-)-methyltransferase family.

Its subcellular location is the cytoplasm. It catalyses the reaction adenosine(37) in tRNA1(Val) + S-adenosyl-L-methionine = N(6)-methyladenosine(37) in tRNA1(Val) + S-adenosyl-L-homocysteine + H(+). Specifically methylates the adenine in position 37 of tRNA(1)(Val) (anticodon cmo5UAC). The sequence is that of tRNA1(Val) (adenine(37)-N6)-methyltransferase from Yersinia pseudotuberculosis serotype O:3 (strain YPIII).